We begin with the raw amino-acid sequence, 364 residues long: Alanine racemase (364 aa).

Lysine 35 functions as the Proton acceptor; specific for D-alanine in the catalytic mechanism. Lysine 35 carries the post-translational modification N6-(pyridoxal phosphate)lysine. Arginine 130 contacts substrate. Residue tyrosine 256 is the Proton acceptor; specific for L-alanine of the active site. Methionine 304 provides a ligand contact to substrate.

It belongs to the alanine racemase family. Requires pyridoxal 5'-phosphate as cofactor.

The catalysed reaction is L-alanine = D-alanine. It functions in the pathway amino-acid biosynthesis; D-alanine biosynthesis; D-alanine from L-alanine: step 1/1. In terms of biological role, catalyzes the interconversion of L-alanine and D-alanine. May also act on other amino acids. This chain is Alanine racemase (alr), found in Polaromonas sp. (strain JS666 / ATCC BAA-500).